The chain runs to 421 residues: Cell division protein FtsZ (421 aa).

GTP contacts are provided by residues 26-30 (GGGGN), 132-134 (GTG), Glu-163, Arg-167, and Asn-211.

It belongs to the FtsZ family. Homodimer. Polymerizes to form a dynamic ring structure in a strictly GTP-dependent manner. Interacts directly with several other division proteins.

It localises to the cytoplasm. Its function is as follows. Essential cell division protein that forms a contractile ring structure (Z ring) at the future cell division site. The regulation of the ring assembly controls the timing and the location of cell division. One of the functions of the FtsZ ring is to recruit other cell division proteins to the septum to produce a new cell wall between the dividing cells. Binds GTP and shows GTPase activity. This is Cell division protein FtsZ from Haemophilus influenzae (strain ATCC 51907 / DSM 11121 / KW20 / Rd).